Reading from the N-terminus, the 649-residue chain is Nitrosuccinic acid synthase npaA (649 aa).

It belongs to the nitrosuccinic acid synthase family. The cofactor is FAD.

It carries out the reaction L-aspartate + 3 NADPH + 3 O2 + 2 H(+) = 2-nitrobutanedioate + 3 NADP(+) + 4 H2O. Its pathway is mycotoxin biosynthesis. Nitrosuccinic acid synthase; part of the gene cluster that mediates the biosynthesis of the deadly neurotoxic nitroalkane 3-nitropropanoic acid (3-NPA) that acts as an antimetabolite of succinate and irreversibly inhibits succinate dehydrogenase and disrupts mitochondrial oxidative phosphorylation. NpaA catalyzes the iterative oxidation of L-aspartic acid to nitrosuccinic acid (2-nitrobutanedioate). Alternative amino acid substrates such as L-glutamate and D-aspartate are not accepted by npaA as a substrate, showing the strict substrate specificity toward L-aspartate. The nitrosuccinic acid decarboxylase npaB then facilitates decarboxylation of Nitrosuccinic acid to produce 3-NPA. This chain is Nitrosuccinic acid synthase npaA, found in Aspergillus oryzae (strain ATCC 42149 / RIB 40) (Yellow koji mold).